Consider the following 586-residue polypeptide: ATP-dependent lipid A-core flippase (586 aa).

4 helical membrane passes run 25–45 (AYFIISFIGFGVFAAMEAQLI), 74–94 (LWFVPISVVVLSIIRGIGAYF), 163–183 (VAWFLAMMLIINWKLTLAFIC), and 264–284 (VLHIVLALALAVTFYLIMILW). Residues 28–317 (IISFIGFGVF…LTKINSIIQK (290 aa)) form the ABC transmembrane type-1 domain. One can recognise an ABC transporter domain in the interval 349-583 (VELKDVHFGY…SGVYANLYHS (235 aa)). 382-389 (GSSGSGKS) is an ATP binding site.

This sequence belongs to the ABC transporter superfamily. Lipid exporter (TC 3.A.1.106) family. In terms of assembly, homodimer.

The protein resides in the cell inner membrane. The catalysed reaction is ATP + H2O + lipid A-core oligosaccharideSide 1 = ADP + phosphate + lipid A-core oligosaccharideSide 2.. Functionally, involved in lipopolysaccharide (LPS) biosynthesis. Translocates lipid A-core from the inner to the outer leaflet of the inner membrane. Transmembrane domains (TMD) form a pore in the inner membrane and the ATP-binding domain (NBD) is responsible for energy generation. This chain is ATP-dependent lipid A-core flippase, found in Saccharophagus degradans (strain 2-40 / ATCC 43961 / DSM 17024).